A 288-amino-acid chain; its full sequence is ATP synthase gamma chain (288 aa).

This sequence belongs to the ATPase gamma chain family. In terms of assembly, F-type ATPases have 2 components, CF(1) - the catalytic core - and CF(0) - the membrane proton channel. CF(1) has five subunits: alpha(3), beta(3), gamma(1), delta(1), epsilon(1). CF(0) has three main subunits: a, b and c.

Its subcellular location is the cell inner membrane. Functionally, produces ATP from ADP in the presence of a proton gradient across the membrane. The gamma chain is believed to be important in regulating ATPase activity and the flow of protons through the CF(0) complex. This Vibrio vulnificus (strain CMCP6) protein is ATP synthase gamma chain.